The sequence spans 480 residues: Immune evasion protein OPG047 (480 aa).

In terms of domain architecture, BTB spans 10 to 90; sequence CKNILALSMT…SYTGKVYIDS (81 aa). The 99-residue stretch at 125-223 folds into the BACK domain; it reads CVECYMMGIE…NYLSPRGINN (99 aa). Kelch repeat units follow at residues 273–319, 320–363, 365–408, 410–447, and 448–480; these read VVYL…PANN, KLYV…SINN, IYVM…VFGR, LFLV…IVDN, and KLLL…WDGK.

It belongs to the orthopoxvirus OPG047 family.

In terms of biological role, might have a role in the suppression of host immune response. The polypeptide is Immune evasion protein OPG047 (OPG047) (Vaccinia virus (strain Copenhagen) (VACV)).